The primary structure comprises 132 residues: NAD(P)H-quinone oxidoreductase subunit 3 (132 aa).

The next 3 membrane-spanning stretches (helical) occupy residues 22–42 (FLGFLIICSLVPVLALAASAL), 76–96 (MFALVFVIFDVETVFLYPWAV), and 101–121 (LGLLAFIEALIFIAILVVALV).

This sequence belongs to the complex I subunit 3 family. In terms of assembly, NDH-1 can be composed of about 15 different subunits; different subcomplexes with different compositions have been identified which probably have different functions.

Its subcellular location is the cellular thylakoid membrane. The catalysed reaction is a plastoquinone + NADH + (n+1) H(+)(in) = a plastoquinol + NAD(+) + n H(+)(out). It catalyses the reaction a plastoquinone + NADPH + (n+1) H(+)(in) = a plastoquinol + NADP(+) + n H(+)(out). Functionally, NDH-1 shuttles electrons from an unknown electron donor, via FMN and iron-sulfur (Fe-S) centers, to quinones in the respiratory and/or the photosynthetic chain. The immediate electron acceptor for the enzyme in this species is believed to be plastoquinone. Couples the redox reaction to proton translocation, and thus conserves the redox energy in a proton gradient. Cyanobacterial NDH-1 also plays a role in inorganic carbon-concentration. The polypeptide is NAD(P)H-quinone oxidoreductase subunit 3 (ndhC) (Thermosynechococcus vestitus (strain NIES-2133 / IAM M-273 / BP-1)).